Here is a 268-residue protein sequence, read N- to C-terminus: ClpXP adapter protein SpxH (268 aa).

It belongs to the SpxH family. As to quaternary structure, interacts with Spx.

Its subcellular location is the cytoplasm. Functionally, adapter protein required for efficient degradation of Spx by ClpXP under non-stress conditions. Interaction with Spx stabilizes Spx and exposes the C-terminus of Spx for recognition and proteolysis by ClpXP. The sequence is that of ClpXP adapter protein SpxH from Staphylococcus aureus (strain COL).